The sequence spans 329 residues: MSAFDTNPFADPVDVNPFQDPSVTQLTNAPQGGLAEFNPFSETNAATTVPVTQLPGSSQPAVLQPSVEPTQPTPQAVVSAAQAGLLRQQEELDRKAAELERKERELQNTVANLHVRQNNWPPLPSWCPVKPCFYQDFSTEIPADYQRICKMLYYLWMLHSVTLFLNLLACLAWFSGNSSKGVDFGLSILWFLIFTPCAFLCWYRPIYKAFRSDNSFSFFVFFFVFFCQIGIYIIQLVGIPGLGDSGWIAALSTLDNHSLAISVIMMVVAGFFTLCAVLSVFLLQRVHSLYRRTGASFQQAQEEFSQGIFSSRTFHRAASSAAQGAFQGN.

2 disordered regions span residues 1 to 21 and 51 to 72; these read MSAF…FQDP and VTQL…PTQP. Residues 1–153 are Cytoplasmic-facing; it reads MSAFDTNPFA…DYQRICKMLY (153 aa). The helical transmembrane segment at 154–174 threads the bilayer; it reads YLWMLHSVTLFLNLLACLAWF. Residues 175-181 are Lumenal-facing; that stretch reads SGNSSKG. The helical transmembrane segment at 182-202 threads the bilayer; the sequence is VDFGLSILWFLIFTPCAFLCW. The Cytoplasmic portion of the chain corresponds to 203-218; it reads YRPIYKAFRSDNSFSF. The interval 203–218 is interaction with SLC9A7; the sequence is YRPIYKAFRSDNSFSF. Residues 219 to 239 form a helical membrane-spanning segment; it reads FVFFFVFFCQIGIYIIQLVGI. Topologically, residues 240 to 262 are lumenal; the sequence is PGLGDSGWIAALSTLDNHSLAIS. The helical transmembrane segment at 263 to 283 threads the bilayer; sequence VIMMVVAGFFTLCAVLSVFLL. Residues 284 to 329 lie on the Cytoplasmic side of the membrane; that stretch reads QRVHSLYRRTGASFQQAQEEFSQGIFSSRTFHRAASSAAQGAFQGN. Phosphoserine is present on residues Ser-319 and Ser-320.

It belongs to the SCAMP family. In terms of assembly, interacts with SLC6A4 and SLC9A7. Interacts with SLC9A5; this interaction regulates SLC9A5 cell-surface targeting and SLC9A5 activity. Widely expressed.

Its subcellular location is the golgi apparatus. The protein localises to the trans-Golgi network membrane. It is found in the recycling endosome membrane. Functions in post-Golgi recycling pathways. Acts as a recycling carrier to the cell surface. The polypeptide is Secretory carrier-associated membrane protein 2 (SCAMP2) (Homo sapiens (Human)).